Consider the following 387-residue polypeptide: 1-deoxy-D-xylulose 5-phosphate reductoisomerase (387 aa).

Residues Thr-10, Gly-11, Ser-12, Val-13, Asn-38, and Asn-119 each contribute to the NADPH site. A 1-deoxy-D-xylulose 5-phosphate-binding site is contributed by Lys-120. NADPH is bound at residue Glu-121. Mn(2+) is bound at residue Asp-145. 1-deoxy-D-xylulose 5-phosphate-binding residues include Ser-146, Glu-147, Ser-170, and His-193. Residue Glu-147 coordinates Mn(2+). Position 199 (Gly-199) interacts with NADPH. Residues Ser-206, Asn-211, Lys-212, and Glu-215 each coordinate 1-deoxy-D-xylulose 5-phosphate. Mn(2+) is bound at residue Glu-215.

Belongs to the DXR family. Mg(2+) serves as cofactor. Mn(2+) is required as a cofactor.

The enzyme catalyses 2-C-methyl-D-erythritol 4-phosphate + NADP(+) = 1-deoxy-D-xylulose 5-phosphate + NADPH + H(+). The protein operates within isoprenoid biosynthesis; isopentenyl diphosphate biosynthesis via DXP pathway; isopentenyl diphosphate from 1-deoxy-D-xylulose 5-phosphate: step 1/6. Functionally, catalyzes the NADPH-dependent rearrangement and reduction of 1-deoxy-D-xylulose-5-phosphate (DXP) to 2-C-methyl-D-erythritol 4-phosphate (MEP). The protein is 1-deoxy-D-xylulose 5-phosphate reductoisomerase of Wolbachia pipientis wMel.